The following is a 186-amino-acid chain: Acireductone dioxygenase (186 aa).

Positions 103, 105, 109, and 147 each coordinate Fe(2+). 4 residues coordinate Ni(2+): H103, H105, E109, and H147.

This sequence belongs to the acireductone dioxygenase (ARD) family. Monomer. Fe(2+) serves as cofactor. The cofactor is Ni(2+).

It carries out the reaction 1,2-dihydroxy-5-(methylsulfanyl)pent-1-en-3-one + O2 = 3-(methylsulfanyl)propanoate + CO + formate + 2 H(+). The catalysed reaction is 1,2-dihydroxy-5-(methylsulfanyl)pent-1-en-3-one + O2 = 4-methylsulfanyl-2-oxobutanoate + formate + 2 H(+). It functions in the pathway amino-acid biosynthesis; L-methionine biosynthesis via salvage pathway; L-methionine from S-methyl-5-thio-alpha-D-ribose 1-phosphate: step 5/6. In terms of biological role, catalyzes 2 different reactions between oxygen and the acireductone 1,2-dihydroxy-3-keto-5-methylthiopentene (DHK-MTPene) depending upon the metal bound in the active site. Fe-containing acireductone dioxygenase (Fe-ARD) produces formate and 2-keto-4-methylthiobutyrate (KMTB), the alpha-ketoacid precursor of methionine in the methionine recycle pathway. Ni-containing acireductone dioxygenase (Ni-ARD) produces methylthiopropionate, carbon monoxide and formate, and does not lie on the methionine recycle pathway. The sequence is that of Acireductone dioxygenase from Synechococcus sp. (strain CC9605).